The following is a 2110-amino-acid chain: Protein Ycf2 (2110 aa).

A disordered region spans residues 190–209 (DSSQLKGSSDQSRDPLDSIS). 1442-1449 (GSIGTGRS) contacts ATP.

The protein belongs to the Ycf2 family.

The protein localises to the plastid. It is found in the chloroplast stroma. In terms of biological role, probable ATPase of unknown function. Its presence in a non-photosynthetic plant (Epifagus virginiana) and experiments in tobacco indicate that it has an essential function which is probably not related to photosynthesis. This chain is Protein Ycf2, found in Panax ginseng (Korean ginseng).